We begin with the raw amino-acid sequence, 661 residues long: Peroxisomal acyl-coenzyme A oxidase 1 (661 aa).

Residues Lys-89 and Lys-90 each carry the N6-succinyllysine modification. Thr-139 contributes to the FAD binding site. An N6-succinyllysine modification is found at Lys-159. An FAD-binding site is contributed by Gly-178. Lys-216 is subject to N6-acetyllysine. Position 241 is an N6-succinyllysine (Lys-241). 3 positions are modified to N6-acetyllysine: Lys-255, Lys-267, and Lys-272. Position 349 is an N6-succinyllysine (Lys-349). Glu-421 functions as the Proton acceptor in the catalytic mechanism. Lys-437, Lys-446, Lys-512, and Lys-637 each carry N6-acetyllysine; alternate. N6-succinyllysine; alternate occurs at positions 437, 446, 512, and 637. Lys-643 is modified (N6-succinyllysine). Phosphoserine is present on Ser-649. Lys-652 is subject to N6-acetyllysine. Lys-655 carries the N6-succinyllysine modification. The short motif at 659–661 is the Microbody targeting signal element; sequence SKL.

Belongs to the acyl-CoA oxidase family. Homodimer. Interacts with LONP2. FAD serves as cofactor.

It is found in the peroxisome. It catalyses the reaction a 2,3-saturated acyl-CoA + O2 = a (2E)-enoyl-CoA + H2O2. The enzyme catalyses hexadecanoyl-CoA + O2 = (2E)-hexadecenoyl-CoA + H2O2. The catalysed reaction is dodecanoyl-CoA + O2 = (2E)-dodecenoyl-CoA + H2O2. It carries out the reaction octanoyl-CoA + O2 = (2E)-octenoyl-CoA + H2O2. It catalyses the reaction decanoyl-CoA + O2 = (2E)-decenoyl-CoA + H2O2. The enzyme catalyses tetradecanoyl-CoA + O2 = (2E)-tetradecenoyl-CoA + H2O2. The catalysed reaction is hexadecanedioyl-CoA + O2 = (2E)-hexadecenedioyl-CoA + H2O2. It carries out the reaction tetracosanoyl-CoA + O2 = (2E)-tetracosenoyl-CoA + H2O2. It catalyses the reaction glutaryl-CoA + O2 = (2E)-glutaconyl-CoA + H2O2. The enzyme catalyses hexanoyl-CoA + O2 = (2E)-hexenoyl-CoA + H2O2. The catalysed reaction is octadecanoyl-CoA + O2 = (2E)-octadecenoyl-CoA + H2O2. It carries out the reaction (5Z,8Z,11Z,14Z,17Z)-eicosapentaenoyl-CoA + O2 = (2E,5Z,8Z,11Z,14Z,17Z)-icosahexaenoyl-CoA + H2O2. It catalyses the reaction (6Z,9Z,12Z,15Z,18Z,21Z)-tetracosahexaenoyl-CoA + O2 = (2E,6Z,9Z,12Z,15Z,18Z,21Z)-tetracosaheptaenoyl-CoA + H2O2. It functions in the pathway lipid metabolism; peroxisomal fatty acid beta-oxidation. Involved in the initial and rate-limiting step of peroxisomal beta-oxidation of straight-chain saturated and unsaturated very-long-chain fatty acids. Catalyzes the desaturation of fatty acyl-CoAs such as palmitoyl-CoA (hexadecanoyl-CoA) to 2-trans-enoyl-CoAs ((2E)-enoyl-CoAs) such as (2E)-hexadecenoyl-CoA, and donates electrons directly to molecular oxygen (O(2)), thereby producing hydrogen peroxide (H(2)O(2)). Isoform 2 shows higher activity with hexadecanoyl-CoA as substrate than isoform 1. The polypeptide is Peroxisomal acyl-coenzyme A oxidase 1 (ACOX1) (Phascolarctos cinereus (Koala)).